We begin with the raw amino-acid sequence, 347 residues long: DNA-directed RNA polymerase subunit alpha (347 aa).

The alpha N-terminal domain (alpha-NTD) stretch occupies residues 1–243; sequence MLIKQGDRLI…DQISVFINFD (243 aa). The alpha C-terminal domain (alpha-CTD) stretch occupies residues 260–347; it reads VNENLFKGID…EWKRKQQNEA (88 aa).

The protein belongs to the RNA polymerase alpha chain family. Homodimer. The RNAP catalytic core consists of 2 alpha, 1 beta, 1 beta' and 1 omega subunit. When a sigma factor is associated with the core the holoenzyme is formed, which can initiate transcription.

The catalysed reaction is RNA(n) + a ribonucleoside 5'-triphosphate = RNA(n+1) + diphosphate. In terms of biological role, DNA-dependent RNA polymerase catalyzes the transcription of DNA into RNA using the four ribonucleoside triphosphates as substrates. The polypeptide is DNA-directed RNA polymerase subunit alpha (Nitratidesulfovibrio vulgaris (strain DSM 19637 / Miyazaki F) (Desulfovibrio vulgaris)).